The primary structure comprises 455 residues: 23S rRNA (uracil(1939)-C(5))-methyltransferase RlmD (455 aa).

Positions 12-70 (SKQLSAKLSLSVTQLDHLGAGIAQHQGKIVFIPGVLPGETATVQFVEQKKSYAKAKLIS) constitute a TRAM domain. [4Fe-4S] cluster is bound by residues Cys-83, Cys-89, Cys-92, and Cys-174. S-adenosyl-L-methionine contacts are provided by Gln-288, Phe-317, Asn-322, Glu-338, Asp-365, and Asp-385. The Nucleophile role is filled by Cys-411.

Belongs to the class I-like SAM-binding methyltransferase superfamily. RNA M5U methyltransferase family. RlmD subfamily.

The catalysed reaction is uridine(1939) in 23S rRNA + S-adenosyl-L-methionine = 5-methyluridine(1939) in 23S rRNA + S-adenosyl-L-homocysteine + H(+). Functionally, catalyzes the formation of 5-methyl-uridine at position 1939 (m5U1939) in 23S rRNA. This is 23S rRNA (uracil(1939)-C(5))-methyltransferase RlmD from Shewanella frigidimarina (strain NCIMB 400).